The chain runs to 150 residues: Peptide deformylase (150 aa).

Positions 88 and 130 each coordinate Fe cation. The active site involves Glu131. Fe cation is bound at residue His134.

Belongs to the polypeptide deformylase family. It depends on Fe(2+) as a cofactor.

It catalyses the reaction N-terminal N-formyl-L-methionyl-[peptide] + H2O = N-terminal L-methionyl-[peptide] + formate. Functionally, removes the formyl group from the N-terminal Met of newly synthesized proteins. Requires at least a dipeptide for an efficient rate of reaction. N-terminal L-methionine is a prerequisite for activity but the enzyme has broad specificity at other positions. In Desulfitobacterium hafniense (strain Y51), this protein is Peptide deformylase.